An 818-amino-acid polypeptide reads, in one-letter code: Patatin-like phospholipase domain-containing protein YALI0D16379g (818 aa).

Disordered stretches follow at residues 1-50 and 154-178; these read MLKL…RDVN and EEKR…KTKE. Positions 22 to 38 are enriched in polar residues; the sequence is SQQLTLDSPEGSETSSR. Basic and acidic residues predominate over residues 164 to 178; the sequence is KDKEGSEGDKTKTKE. A helical transmembrane segment spans residues 223-243; that stretch reads WPALFFIGMWLLFLTTIYASV. A PNPLA domain is found at 398 to 589; the sequence is LCLSGGGCFA…RTDIPVDALN (192 aa). A GXSXG motif is present at residues 429-433; the sequence is GTSGG. Ser431 acts as the Nucleophile in catalysis. Residue Asp576 is the Proton acceptor of the active site. The tract at residues 781-805 is disordered; sequence AGTDISSSNSDYDHEPQWEMDEGDS.

It belongs to the PLPL family.

The protein resides in the membrane. Probable lipid hydrolase. The sequence is that of Patatin-like phospholipase domain-containing protein YALI0D16379g from Yarrowia lipolytica (strain CLIB 122 / E 150) (Yeast).